The chain runs to 250 residues: Flagellar L-ring protein (250 aa).

The N-terminal stretch at M1–G32 is a signal peptide. C33 carries the N-palmitoyl cysteine lipid modification. C33 is lipidated: S-diacylglycerol cysteine.

This sequence belongs to the FlgH family. As to quaternary structure, the basal body constitutes a major portion of the flagellar organelle and consists of four rings (L,P,S, and M) mounted on a central rod.

The protein localises to the cell outer membrane. Its subcellular location is the bacterial flagellum basal body. In terms of biological role, assembles around the rod to form the L-ring and probably protects the motor/basal body from shearing forces during rotation. The sequence is that of Flagellar L-ring protein from Hydrogenovibrio crunogenus (strain DSM 25203 / XCL-2) (Thiomicrospira crunogena).